The primary structure comprises 487 residues: Protein nucleotidyltransferase YdiU (487 aa).

Residues Gly-85, Gly-87, Arg-88, Lys-108, Asp-120, Gly-121, Arg-171, and Arg-178 each contribute to the ATP site. Catalysis depends on Asp-247, which acts as the Proton acceptor. Residues Asn-248 and Asp-257 each coordinate Mg(2+). Asp-257 provides a ligand contact to ATP.

This sequence belongs to the SELO family. The cofactor is Mg(2+). It depends on Mn(2+) as a cofactor.

It carries out the reaction L-seryl-[protein] + ATP = 3-O-(5'-adenylyl)-L-seryl-[protein] + diphosphate. The enzyme catalyses L-threonyl-[protein] + ATP = 3-O-(5'-adenylyl)-L-threonyl-[protein] + diphosphate. The catalysed reaction is L-tyrosyl-[protein] + ATP = O-(5'-adenylyl)-L-tyrosyl-[protein] + diphosphate. It catalyses the reaction L-histidyl-[protein] + UTP = N(tele)-(5'-uridylyl)-L-histidyl-[protein] + diphosphate. It carries out the reaction L-seryl-[protein] + UTP = O-(5'-uridylyl)-L-seryl-[protein] + diphosphate. The enzyme catalyses L-tyrosyl-[protein] + UTP = O-(5'-uridylyl)-L-tyrosyl-[protein] + diphosphate. Its function is as follows. Nucleotidyltransferase involved in the post-translational modification of proteins. It can catalyze the addition of adenosine monophosphate (AMP) or uridine monophosphate (UMP) to a protein, resulting in modifications known as AMPylation and UMPylation. This chain is Protein nucleotidyltransferase YdiU, found in Agrobacterium fabrum (strain C58 / ATCC 33970) (Agrobacterium tumefaciens (strain C58)).